Reading from the N-terminus, the 326-residue chain is tRNA-modifying protein YgfZ (326 aa).

Residues Trp-27 and Trp-189 each contribute to the folate site.

The protein belongs to the tRNA-modifying YgfZ family.

It localises to the cytoplasm. Its function is as follows. Folate-binding protein involved in regulating the level of ATP-DnaA and in the modification of some tRNAs. It is probably a key factor in regulatory networks that act via tRNA modification, such as initiation of chromosomal replication. In Shigella boydii serotype 18 (strain CDC 3083-94 / BS512), this protein is tRNA-modifying protein YgfZ.